The primary structure comprises 236 residues: Rho-related GTP-binding protein RhoV (236 aa).

Positions 1-27 (MPPRELSEAESSPLRSPTPPPGRGSAS) are disordered. At S25 the chain carries Phosphoserine. GTP contacts are provided by residues 38–45 (GDGAVGKS), 85–89 (DTAGQ), and 143–146 (TQAD). C234 carries S-palmitoyl cysteine lipidation.

Belongs to the small GTPase superfamily. Rho family. In terms of assembly, interacts with PAK2. It depends on Mg(2+) as a cofactor.

Its subcellular location is the cell membrane. It localises to the endosome membrane. Plays a role in the control of the actin cytoskeleton via activation of the JNK pathway. This Bos taurus (Bovine) protein is Rho-related GTP-binding protein RhoV.